Reading from the N-terminus, the 115-residue chain is Large ribosomal subunit protein bL19 (115 aa).

This sequence belongs to the bacterial ribosomal protein bL19 family.

In terms of biological role, this protein is located at the 30S-50S ribosomal subunit interface and may play a role in the structure and function of the aminoacyl-tRNA binding site. In Nitratidesulfovibrio vulgaris (strain ATCC 29579 / DSM 644 / CCUG 34227 / NCIMB 8303 / VKM B-1760 / Hildenborough) (Desulfovibrio vulgaris), this protein is Large ribosomal subunit protein bL19.